The following is a 610-amino-acid chain: 1,8-cineol synthase, chloroplastic (610 aa).

The transit peptide at 1-51 (MNHHLIITPIFHLQIMLPVATLKRPPPPAATCSIYSFSRGTPSLVSKARLS) directs the protein to the chloroplast. Arg-322, Asp-359, Asp-363, Arg-500, and Asn-503 together coordinate (2E)-geranyl diphosphate. Mg(2+)-binding residues include Asp-359 and Asp-363. The DDXXD motif signature appears at 359–363 (DDVYD). 3 residues coordinate Mg(2+): Asn-503, Thr-507, and Glu-511.

Belongs to the terpene synthase family. Tpsb subfamily. In terms of assembly, monomer. Mg(2+) is required as a cofactor. Requires Mn(2+) as cofactor. Confined to buds and flowers.

It is found in the plastid. The protein resides in the chloroplast. The catalysed reaction is (2E)-geranyl diphosphate + H2O = 1,8-cineole + diphosphate. It catalyses the reaction (2E)-geranyl diphosphate = limonene + diphosphate. The enzyme catalyses (2E)-geranyl diphosphate = sabinene + diphosphate. It carries out the reaction (2E)-geranyl diphosphate = (E)-beta-ocimene + diphosphate. The catalysed reaction is (2E)-geranyl diphosphate = beta-myrcene + diphosphate. It catalyses the reaction (2E)-geranyl diphosphate = alpha-pinene + diphosphate. The enzyme catalyses (2E)-geranyl diphosphate + H2O = (S)-alpha-terpineol + diphosphate. Its pathway is secondary metabolite biosynthesis; terpenoid biosynthesis. Monoterpene synthase involved in the biosynthesis of monoterpene natural products of the 'cineole cassette', volatile compounds present in floral scent. Catalyzes the conversion of (2E)-geranyl diphosphate (GPP) into 1,8-cineole and, as minor products, limonene, sabinene, (E)-beta-ocimene, beta-myrcene, alpha-pinene and alpha-terpineol. The sequence is that of 1,8-cineol synthase, chloroplastic from Nicotiana suaveolens (Australian tobacco).